Reading from the N-terminus, the 506-residue chain is Maturase K (506 aa).

This sequence belongs to the intron maturase 2 family. MatK subfamily.

The protein localises to the plastid. The protein resides in the chloroplast. Its function is as follows. Usually encoded in the trnK tRNA gene intron. Probably assists in splicing its own and other chloroplast group II introns. This Cytisus scoparius (Scotch broom) protein is Maturase K.